Consider the following 75-residue polypeptide: Probable protein BRICK1-A (75 aa).

Residues 41 to 72 (MSCRSRLATLNEKLTALERRIEYIEARVTKGE) are a coiled coil.

This sequence belongs to the BRK1 family.

Its subcellular location is the cytoplasm. The protein resides in the cytoskeleton. In terms of biological role, involved in regulation of actin and microtubule organization. Part of a WAVE complex that activates the Arp2/3 complex. In Xenopus laevis (African clawed frog), this protein is Probable protein BRICK1-A (brk1-a).